We begin with the raw amino-acid sequence, 34 residues long: Sperm protein EM1 (34 aa).

The segment covering 1-17 (AGSKSRSRSRSRSRSKS) has biased composition (basic residues). Positions 1-34 (AGSKSRSRSRSRSRSKSPAKSASPKSAASPRASR) are disordered. Repeat copies occupy residues 3–4 (SK), 5–6 (SR), 7–8 (SR), 9–10 (SR), 11–12 (SR), 13–14 (SR), and 15–16 (SK). The interval 3–16 (SKSRSRSRSRSRSK) is 7 X 2 AA tandem repeats of S-[KR]. Over residues 18-34 (PAKSASPKSAASPRASR) the composition is skewed to low complexity.

In terms of tissue distribution, sperm.

The protein resides in the nucleus. This Ensis minor (Razor shell) protein is Sperm protein EM1.